Consider the following 251-residue polypeptide: Flagellar L-ring protein (251 aa).

The N-terminal stretch at 1–17 is a signal peptide; the sequence is MIRKLAALIVAAAALQA. Cys18 is lipidated: N-palmitoyl cysteine. A lipid anchor (S-diacylglycerol cysteine) is attached at Cys18.

The protein belongs to the FlgH family. The basal body constitutes a major portion of the flagellar organelle and consists of four rings (L,P,S, and M) mounted on a central rod.

Its subcellular location is the cell outer membrane. The protein resides in the bacterial flagellum basal body. Its function is as follows. Assembles around the rod to form the L-ring and probably protects the motor/basal body from shearing forces during rotation. The chain is Flagellar L-ring protein from Maricaulis maris (strain MCS10) (Caulobacter maris).